We begin with the raw amino-acid sequence, 210 residues long: Riboflavin kinase (210 aa).

Positions 1 to 81 (MECRERRLAA…DLLRYFNIAS (81 aa)) are H-T-H motif-like. The riboflavin kinase stretch occupies residues 82-210 (IRLVGRVVSG…GDVVEVEVLL (129 aa)). 91 to 96 (GLGEGA) contributes to the CDP binding site. Residues T120 and N122 each coordinate Mg(2+). FMN-binding residues include T177 and E185. 190-193 (VKLR) serves as a coordination point for CDP.

This sequence belongs to the archaeal riboflavin kinase family. It depends on Mg(2+) as a cofactor.

The catalysed reaction is riboflavin + CTP = CDP + FMN + H(+). It functions in the pathway cofactor biosynthesis; FMN biosynthesis; FMN from riboflavin (CTP route): step 1/1. Catalyzes the CTP-dependent phosphorylation of riboflavin (vitamin B2) to form flavin mononucleotide (FMN). The sequence is that of Riboflavin kinase (ribK) from Pyrobaculum arsenaticum (strain DSM 13514 / JCM 11321 / PZ6).